The primary structure comprises 259 residues: Haloacid dehalogenase-like hydrolase domain-containing protein 2 (259 aa).

Mg(2+)-binding residues include Asp-13 and Ser-15. Substrate-binding positions include 13–15 (DLS) and 46–47 (TN). The stretch at 47–71 (NTTKESKQDLLERLRKLEFDISEDE) forms a coiled coil. The residue at position 50 (Lys-50) is an N6-succinyllysine. Residue Lys-179 coordinates substrate. Asp-204 provides a ligand contact to Mg(2+).

It belongs to the HAD-like hydrolase superfamily. The cofactor is Mg(2+).

This is Haloacid dehalogenase-like hydrolase domain-containing protein 2 (HDHD2) from Pongo abelii (Sumatran orangutan).